We begin with the raw amino-acid sequence, 68 residues long: Conotoxin Cal12.1p3 (68 aa).

A propeptide spanning residues 1–21 (DLITNSYTRGKPRHVTSWPKL) is cleaved from the precursor.

In terms of processing, contains 4 disulfide bonds. Expressed by the venom duct.

The protein localises to the secreted. In Californiconus californicus (California cone), this protein is Conotoxin Cal12.1p3.